An 811-amino-acid polypeptide reads, in one-letter code: Glycerol-3-phosphate acyltransferase (811 aa).

Residues 303 to 308 carry the HXXXXD motif motif; it reads CHRSHM.

The protein belongs to the GPAT/DAPAT family.

The protein localises to the cell inner membrane. The catalysed reaction is sn-glycerol 3-phosphate + an acyl-CoA = a 1-acyl-sn-glycero-3-phosphate + CoA. It participates in phospholipid metabolism; CDP-diacylglycerol biosynthesis; CDP-diacylglycerol from sn-glycerol 3-phosphate: step 1/3. This Glaesserella parasuis serovar 5 (strain SH0165) (Haemophilus parasuis) protein is Glycerol-3-phosphate acyltransferase.